Consider the following 660-residue polypeptide: Replication protein E1 (660 aa).

The interval 1-60 is disordered; it reads MADNSGTEGEEEDCSEAERAGGWFMVEAIVDRRTGDTISSDEDEEDEGEDMVDFIDDRPI. Positions 39–54 are enriched in acidic residues; sequence SSDEDEEDEGEDMVDF. A Nuclear localization signal motif is present at residues 87-89; the sequence is KRK. Phosphoserine; by host occurs at positions 93, 97, 109, and 122. The Nuclear export signal motif lies at 108–117; that stretch reads LSPRLDAIKL. The disordered stretch occupies residues 128 to 196; that stretch reads LFQLPDSGYG…DGEESQPLST (69 aa). A compositionally biased stretch (polar residues) spans 136–163; it reads YGQTQVDTDTGPSQVQDGCETGDQNGRQ. Residues 169 to 186 are compositionally biased toward basic and acidic residues; the sequence is SGTKDGENGSQEEERAGG. The interval 197–363 is DNA-binding region; the sequence is ETEKGACGVL…QTMVGHALQE (167 aa). Residues 462-612 enclose the SF3 helicase domain; that stretch reads VEFIPFLCAF…CPLTSKGEPV (151 aa). 488 to 495 is a binding site for ATP; the sequence is GPADTGKS. A Glycyl lysine isopeptide (Lys-Gly) (interchain with G-Cter in SUMO) cross-link involves residue K569. Acidic residues predominate over residues 635–644; that stretch reads DPDDEEENGE. The interval 635 to 660 is disordered; it reads DPDDEEENGEPSEPFRCVPGQNTRTV.

The protein belongs to the papillomaviridae E1 protein family. In terms of assembly, can form hexamers. Interacts with E2 protein; this interaction increases E1 DNA binding specificity. Interacts with host DNA polymerase subunit POLA2. Interacts with host single stranded DNA-binding protein RPA1. Interacts with host TOP1; this interaction stimulates the enzymatic activity of TOP1. Phosphorylated. Post-translationally, sumoylated.

The protein localises to the host nucleus. It carries out the reaction Couples ATP hydrolysis with the unwinding of duplex DNA by translocating in the 3'-5' direction.. The catalysed reaction is ATP + H2O = ADP + phosphate + H(+). Functionally, ATP-dependent DNA 3'-5' helicase required for initiation of viral DNA replication. It forms a complex with the viral E2 protein. The E1-E2 complex binds to the replication origin which contains binding sites for both proteins. During the initial step, a dimer of E1 interacts with a dimer of protein E2 leading to a complex that binds the viral origin of replication with high specificity. Then, a second dimer of E1 displaces the E2 dimer in an ATP-dependent manner to form the E1 tetramer. Following this, two E1 monomers are added to each half of the site, which results in the formation of two E1 trimers on the viral ori. Subsequently, two hexamers will be created. The double hexamer acts as a bi-directional helicase machinery and unwinds the viral DNA and then recruits the host DNA polymerase to start replication. This Human papillomavirus 29 protein is Replication protein E1.